The primary structure comprises 152 residues: Transcriptional regulator MraZ (152 aa).

SpoVT-AbrB domains follow at residues 5 to 52 and 81 to 124; these read ATLV…PLPE and ASEC…DETT.

The protein belongs to the MraZ family. In terms of assembly, forms oligomers.

It localises to the cytoplasm. The protein resides in the nucleoid. Negatively regulates its own expression and that of the subsequent genes in the proximal part of the division and cell wall (dcw) gene cluster. Acts by binding directly to DNA. May also regulate the expression of genes outside the dcw cluster. The chain is Transcriptional regulator MraZ from Salmonella gallinarum (strain 287/91 / NCTC 13346).